A 1703-amino-acid polypeptide reads, in one-letter code: Mediator of RNA polymerase II transcription subunit 14 (1703 aa).

A compositionally biased stretch (polar residues) spans leucine 755–alanine 766. The segment at leucine 755–alanine 781 is disordered.

It belongs to the Mediator complex subunit 14 family. As to quaternary structure, component of the Mediator complex. Interacts with CDKE-1, HDA19 and LUG. Interacts with PTAC12/HMR/PAP5 and PIF4. In terms of tissue distribution, expressed in roots, stems, developing embryos, young leaf primordia, shoot apical meristems, inflorescence meristems, tapetum in anthers, ovules and floral organ primordia, but not in mature organs.

Its subcellular location is the nucleus. Functionally, component of the Mediator complex, a coactivator involved in the regulated transcription of nearly all RNA polymerase II-dependent genes. Mediator functions as a bridge to convey information from gene-specific regulatory proteins to the basal RNA polymerase II transcription machinery. The Mediator complex, having a compact conformation in its free form, is recruited to promoters by direct interactions with regulatory proteins and serves for the assembly of a functional pre-initiation complex with RNA polymerase II and the general transcription factors. Binds to G-box (5'-CACGTG-3')-containing regions of target genes promoters (e.g. IAA29 and IAA19). Involved in defining the duration of cell proliferation. Element of a PIF4/HMR/MED14-dependent thermoresponsive process; required for thermomorphogenetic hypocotyl growth in response to daytime warm temperature elicitation by associating to the promoters of thermoresponsive growth-relevant genes (e.g. mainly involved in biosynthesis and signaling of the phytohormone auxin); this also process implies PIF4 and its transcriptional coactivator PTAC12/HMR/PAP5 to promote the expression of target genes. This is Mediator of RNA polymerase II transcription subunit 14 from Arabidopsis thaliana (Mouse-ear cress).